The primary structure comprises 538 residues: Eukaryotic translation initiation factor 3 subunit L (538 aa).

In terms of domain architecture, PCI spans 305–513 (TFSDILLYIQ…IHIADTKVSH (209 aa)).

It belongs to the eIF-3 subunit L family. Component of the eukaryotic translation initiation factor 3 (eIF-3) complex. The eIF-3 complex interacts with pix.

It is found in the cytoplasm. In terms of biological role, component of the eukaryotic translation initiation factor 3 (eIF-3) complex, which is involved in protein synthesis of a specialized repertoire of mRNAs and, together with other initiation factors, stimulates binding of mRNA and methionyl-tRNAi to the 40S ribosome. The eIF-3 complex specifically targets and initiates translation of a subset of mRNAs involved in cell proliferation. The sequence is that of Eukaryotic translation initiation factor 3 subunit L from Drosophila virilis (Fruit fly).